Consider the following 129-residue polypeptide: Cytochrome c oxidase subunit 13, mitochondrial (129 aa).

A mitochondrion-targeting transit peptide spans 1 to 9; the sequence is MFRQCAKRY. The Mitochondrial matrix segment spans residues 10–43; that stretch reads ASSLPPNALKPAFGPPDKVAAQKFKESLMATEKH. The chain crosses the membrane as a helical span at residues 44 to 71; the sequence is AKDTSNMWVKISVWVALPAIALTAVNTY. Over 72 to 129 the chain is Mitochondrial intermembrane; it reads FVEKEHAEHREHLKHVPDSEWPRDYEFMNIRSKPFFWGDGDKTLFWNPVVNRHIEHDD.

The protein belongs to the cytochrome c oxidase subunit 6A family. In terms of assembly, component of the cytochrome c oxidase (complex IV, CIV), a multisubunit enzyme composed of 12 subunits. The complex is composed of a catalytic core of 3 subunits COX1, COX2 and COX3, encoded in the mitochondrial DNA, and 9 supernumerary subunits COX4, COX5A (or COX5B), COX6, COX7, COX8, COX9, COX12, COX13 and COX26, which are encoded in the nuclear genome. The complex exists as a monomer or a dimer and forms supercomplexes (SCs) in the inner mitochondrial membrane with a dimer of ubiquinol-cytochrome c oxidoreductase (cytochrome b-c1 complex, complex III, CIII), resulting in 2 different assemblies (supercomplexes III(2)IV and III(2)IV(2)). COX13 interacts with COX1 and COX3 on the intermembrane space (IMS) and COX4 on the matrix side.

The protein localises to the mitochondrion inner membrane. It functions in the pathway energy metabolism; oxidative phosphorylation. In terms of biological role, component of the cytochrome c oxidase, the last enzyme in the mitochondrial electron transport chain which drives oxidative phosphorylation. The respiratory chain contains 3 multisubunit complexes succinate dehydrogenase (complex II, CII), ubiquinol-cytochrome c oxidoreductase (cytochrome b-c1 complex, complex III, CIII) and cytochrome c oxidase (complex IV, CIV), that cooperate to transfer electrons derived from NADH and succinate to molecular oxygen, creating an electrochemical gradient over the inner membrane that drives transmembrane transport and the ATP synthase. Cytochrome c oxidase is the component of the respiratory chain that catalyzes the reduction of oxygen to water. Electrons originating from reduced cytochrome c in the intermembrane space (IMS) are transferred via the dinuclear copper A center (CU(A)) of COX2 and heme A of COX1 to the active site in COX1, a binuclear center (BNC) formed by heme A3 and copper B (CU(B)). The BNC reduces molecular oxygen to 2 water molecules using 4 electrons from cytochrome c in the IMS and 4 protons from the mitochondrial matrix. The sequence is that of Cytochrome c oxidase subunit 13, mitochondrial (COX13) from Saccharomyces cerevisiae (strain ATCC 204508 / S288c) (Baker's yeast).